A 113-amino-acid polypeptide reads, in one-letter code: UPF0060 membrane protein CV_3485 (113 aa).

Transmembrane regions (helical) follow at residues 12–32 (GLFV…WLVL), 37–57 (SLWL…LLTL), 67–87 (AAYG…VDGV), and 91–111 (RWDA…MLAP).

Belongs to the UPF0060 family.

The protein resides in the cell inner membrane. The sequence is that of UPF0060 membrane protein CV_3485 from Chromobacterium violaceum (strain ATCC 12472 / DSM 30191 / JCM 1249 / CCUG 213 / NBRC 12614 / NCIMB 9131 / NCTC 9757 / MK).